The primary structure comprises 273 residues: MRKDGARLALPLFDPRHDPGPDFAALVSRDAARTVPTSGDGSLGAQVPHGTTIAALRFAGGVVIAGDRRATEGNFIANRTIEKVFPADRFSGVGIAGAAGPAVEMVRIFQVQLEHYEKVEGKALSLEGKANQLAQMIRQNLPLAMQGLVVMPLFAGWDAERSEGRIFTFDVAGGRYEEVAYYAIGSGGRDARATLKLGWRPGLDEAGAVHLAVQALYEAAQEDAATGGPDALRGIFPVVAVIDREGYRRIDDARLEEIAVELDQAVRERGARR.

The propeptide at methionine 1–glycine 50 is removed in mature form; by autocatalysis. Threonine 51 acts as the Nucleophile in catalysis.

This sequence belongs to the peptidase T1B family. The 20S proteasome core is composed of 14 alpha and 14 beta subunits that assemble into four stacked heptameric rings, resulting in a barrel-shaped structure. The two inner rings, each composed of seven catalytic beta subunits, are sandwiched by two outer rings, each composed of seven alpha subunits. The catalytic chamber with the active sites is on the inside of the barrel. Has a gated structure, the ends of the cylinder being occluded by the N-termini of the alpha-subunits. Is capped by the proteasome-associated ATPase, ARC.

The protein localises to the cytoplasm. It carries out the reaction Cleavage of peptide bonds with very broad specificity.. Its pathway is protein degradation; proteasomal Pup-dependent pathway. With respect to regulation, the formation of the proteasomal ATPase ARC-20S proteasome complex, likely via the docking of the C-termini of ARC into the intersubunit pockets in the alpha-rings, may trigger opening of the gate for substrate entry. Interconversion between the open-gate and close-gate conformations leads to a dynamic regulation of the 20S proteasome proteolysis activity. Component of the proteasome core, a large protease complex with broad specificity involved in protein degradation. The polypeptide is Proteasome subunit beta (Acidimicrobium ferrooxidans (strain DSM 10331 / JCM 15462 / NBRC 103882 / ICP)).